Reading from the N-terminus, the 219-residue chain is Small ribosomal subunit protein uS19 (219 aa).

Residues 1-128 (MGFKGAWNKR…YEEIYAQYKQ (128 aa)) form a unknown region. The segment at 129 to 219 (MTEKKAYVDP…DKTAKVVKKK (91 aa)) is small ribosomal subunit protein uS19.

This sequence belongs to the universal ribosomal protein uS19 family.

In terms of biological role, protein S19 forms a complex with S13 that binds strongly to the 16S ribosomal RNA. In Aquifex pyrophilus, this protein is Small ribosomal subunit protein uS19.